A 442-amino-acid chain; its full sequence is 3-phosphoshikimate 1-carboxyvinyltransferase (442 aa).

A compositionally biased stretch (polar residues) spans 1–11 (MQVSRPLTVSA). A disordered region spans residues 1–25 (MQVSRPLTVSASPKGLSGRTRVPGD). The 3-phosphoshikimate site is built by lysine 26, serine 27, and arginine 31. Lysine 26 is a phosphoenolpyruvate binding site. Residues glycine 98 and arginine 126 each contribute to the phosphoenolpyruvate site. Serine 171, glutamine 173, aspartate 324, and lysine 351 together coordinate 3-phosphoshikimate. A phosphoenolpyruvate-binding site is contributed by glutamine 173. The Proton acceptor role is filled by aspartate 324. Residues arginine 355 and arginine 398 each contribute to the phosphoenolpyruvate site.

It belongs to the EPSP synthase family. As to quaternary structure, monomer.

Its subcellular location is the cytoplasm. It catalyses the reaction 3-phosphoshikimate + phosphoenolpyruvate = 5-O-(1-carboxyvinyl)-3-phosphoshikimate + phosphate. It participates in metabolic intermediate biosynthesis; chorismate biosynthesis; chorismate from D-erythrose 4-phosphate and phosphoenolpyruvate: step 6/7. Catalyzes the transfer of the enolpyruvyl moiety of phosphoenolpyruvate (PEP) to the 5-hydroxyl of shikimate-3-phosphate (S3P) to produce enolpyruvyl shikimate-3-phosphate and inorganic phosphate. This is 3-phosphoshikimate 1-carboxyvinyltransferase from Gluconobacter oxydans (strain 621H) (Gluconobacter suboxydans).